The sequence spans 357 residues: MANAPIRLLIAASGTGGHLFPAIALAEKLPDYQIEWLGVPNRLETQLVPKEYPLNTIAVEGFQQGFGLSSIRIFGKLAGSIIEVRRILKQGNFQGVFTTGGYIAGPAVIAARSLGLPVVFHESNALPGKVTRFFGPWCSAVALGFEVAAKYLPRAKNVCVGTPVRGQFLDGAINSPLDLAIPDGVPLIVVFGGSQGAVAVNKLVRESAKAWFDAGAYVVHLTGDRDPEADSLKHPQYIALPFYNNMAALLQRATLAISRSGAGSLTELAVCGTPAILIPYPFAAEDHQSYNADVFTSSGAALTLKQSELTAQILQSNVLNLLQSPQELAKMGENAHAIAVPDSAEKLAQLVREVVET.

UDP-N-acetyl-alpha-D-glucosamine-binding positions include threonine 15–glycine 17, asparagine 124, arginine 165, serine 194, and glutamine 288.

The protein belongs to the glycosyltransferase 28 family. MurG subfamily.

The protein localises to the cell inner membrane. The enzyme catalyses di-trans,octa-cis-undecaprenyl diphospho-N-acetyl-alpha-D-muramoyl-L-alanyl-D-glutamyl-meso-2,6-diaminopimeloyl-D-alanyl-D-alanine + UDP-N-acetyl-alpha-D-glucosamine = di-trans,octa-cis-undecaprenyl diphospho-[N-acetyl-alpha-D-glucosaminyl-(1-&gt;4)]-N-acetyl-alpha-D-muramoyl-L-alanyl-D-glutamyl-meso-2,6-diaminopimeloyl-D-alanyl-D-alanine + UDP + H(+). Its pathway is cell wall biogenesis; peptidoglycan biosynthesis. Its function is as follows. Cell wall formation. Catalyzes the transfer of a GlcNAc subunit on undecaprenyl-pyrophosphoryl-MurNAc-pentapeptide (lipid intermediate I) to form undecaprenyl-pyrophosphoryl-MurNAc-(pentapeptide)GlcNAc (lipid intermediate II). In Nostoc punctiforme (strain ATCC 29133 / PCC 73102), this protein is UDP-N-acetylglucosamine--N-acetylmuramyl-(pentapeptide) pyrophosphoryl-undecaprenol N-acetylglucosamine transferase.